We begin with the raw amino-acid sequence, 249 residues long: DNA repair protein RecO (249 aa).

Belongs to the RecO family.

Involved in DNA repair and RecF pathway recombination. The polypeptide is DNA repair protein RecO (Mycoplasma mycoides subsp. mycoides SC (strain CCUG 32753 / NCTC 10114 / PG1)).